Reading from the N-terminus, the 473-residue chain is Sensor histidine kinase YclK (473 aa).

Topologically, residues 1-9 are cytoplasmic; sequence MMKIKYLYQ. The helical transmembrane segment at 10–30 threads the bilayer; sequence LLLSHISILILAFVIIISLFS. The Extracellular portion of the chain corresponds to 31–164; sequence HFVKEFAYQN…GVEQMVNQVN (134 aa). A helical transmembrane segment spans residues 165–185; sequence LYMFYAVISTLVITILVSWLL. Over 186–473 the chain is Cytoplasmic; sequence SKFHVKRIQK…IRLPLTAKQQ (288 aa). Residues 187 to 239 enclose the HAMP domain; the sequence is KFHVKRIQKLREATDKVASGDYDIHLENSYGDEIGVLASDFNIMAKKLKQSRD. The Histidine kinase domain maps to 254 to 470; the sequence is DVSHELKTPL…KFIIRLPLTA (217 aa). His257 is subject to Phosphohistidine; by autocatalysis.

Its subcellular location is the cell membrane. The enzyme catalyses ATP + protein L-histidine = ADP + protein N-phospho-L-histidine.. Could be member of the two-component regulatory system YclK/YclJ. Potentially phosphorylates YclJ. This chain is Sensor histidine kinase YclK (yclK), found in Bacillus subtilis (strain 168).